A 125-amino-acid chain; its full sequence is SOSS complex subunit C homolog B (125 aa).

Disordered regions lie at residues 44–73 (PAPQLLGQPTTTTATPDLVSTNSTPPRAAF) and 105–125 (PATPSTTTPPITPIANANNPK).

Belongs to the SOSS-C family.

This is SOSS complex subunit C homolog B from Drosophila willistoni (Fruit fly).